Here is a 507-residue protein sequence, read N- to C-terminus: Probable circularly permuted 1,3-beta-glucanase P23A10.11c YJL171C (507 aa).

The signal sequence occupies residues 1-22; the sequence is MIAKSFIASFLFLCFAFSGVKA. Residues 228–264 are compositionally biased toward low complexity; that stretch reads AAPPDSASESTPASTSYASSTTSATSTSTTSGSSGSS. The disordered stretch occupies residues 228–266; it reads AAPPDSASESTPASTSYASSTTSATSTSTTSGSSGSSDW. The ExDxxE motif motif lies at 412–417; that stretch reads EFDIFE. An N-linked (GlcNAc...) asparagine glycan is attached at Asn-480.

Belongs to the PGA52 family.

The protein resides in the secreted. The catalysed reaction is Hydrolysis of (1-&gt;3)-beta-D-glucosidic linkages in (1-&gt;3)-beta-D-glucans.. In terms of biological role, probable circularly permuted 1,3-beta-glucanase involved in cell wall modification through beta-1,3-glucan network alterations such as increased branching or remodeling. In Schizosaccharomyces pombe (strain 972 / ATCC 24843) (Fission yeast), this protein is Probable circularly permuted 1,3-beta-glucanase P23A10.11c YJL171C.